The primary structure comprises 488 residues: Mannosylglycerate hydrolase MGH2 (488 aa).

Substrate is bound by residues tyrosine 94, 98-101 (WNWD), tyrosine 146, glutamine 167, and glycine 227. Catalysis depends on aspartate 229, which acts as the Proton donor. Substrate contacts are provided by residues arginine 262 and 415-416 (YW). The active-site Proton acceptor is the glutamate 459.

Belongs to the glycosyl hydrolase 63 family.

The catalysed reaction is (2R)-2-O-(alpha-D-mannosyl)-glycerate + H2O = D-mannose + (R)-glycerate. It carries out the reaction (2R)-2-O-(alpha-D-glucopyranosyl)-glycerate + H2O = (R)-glycerate + D-glucose. Activity is not dependent on divalent cations, but it is enhanced by Mn(2+). Catalyzes the hydrolysis of alpha-D-mannosyl-glycerate (MG) to D-glycerate and D-mannose. Can also hydrolyze alpha-D-glucopyranosyl-glycerate (GG)with lower efficiency. This chain is Mannosylglycerate hydrolase MGH2, found in Selaginella moellendorffii (Spikemoss).